The chain runs to 216 residues: LexA repressor (216 aa).

A DNA-binding region (H-T-H motif) is located at residues 28 to 48; that stretch reads RAEIAAEFGFSSPNAAEEHLR. Residues Ser-134 and Lys-171 each act as for autocatalytic cleavage activity in the active site.

Belongs to the peptidase S24 family. As to quaternary structure, homodimer.

The enzyme catalyses Hydrolysis of Ala-|-Gly bond in repressor LexA.. Its function is as follows. Represses a number of genes involved in the response to DNA damage (SOS response), including recA and lexA. In the presence of single-stranded DNA, RecA interacts with LexA causing an autocatalytic cleavage which disrupts the DNA-binding part of LexA, leading to derepression of the SOS regulon and eventually DNA repair. The polypeptide is LexA repressor (Ralstonia pickettii (strain 12J)).